Consider the following 806-residue polypeptide: Leucine--tRNA ligase (806 aa).

The short motif at 38–48 is the 'HIGH' region element; sequence PYPSGEIHMGH. A 'KMSKS' region motif is present at residues 572–576; the sequence is KMSKS. Residue lysine 575 coordinates ATP.

It belongs to the class-I aminoacyl-tRNA synthetase family.

The protein resides in the cytoplasm. The enzyme catalyses tRNA(Leu) + L-leucine + ATP = L-leucyl-tRNA(Leu) + AMP + diphosphate. This Helicobacter pylori (strain J99 / ATCC 700824) (Campylobacter pylori J99) protein is Leucine--tRNA ligase.